Here is an 822-residue protein sequence, read N- to C-terminus: Phenylalanine--tRNA ligase beta subunit (822 aa).

In terms of domain architecture, tRNA-binding spans 39–150 (ADRLVGFRTA…ETAPIGESYA (112 aa)). Positions 399-502 (DWKRTARLRF…RLYGLDNVPA (104 aa)) constitute a B5 domain. The Mg(2+) site is built by Asp-486, Glu-489, and Glu-490. An FDX-ACB domain is found at 728–821 (SPLQPVRRDF…VLKATGAVLR (94 aa)).

The protein belongs to the phenylalanyl-tRNA synthetase beta subunit family. Type 1 subfamily. Tetramer of two alpha and two beta subunits. Mg(2+) serves as cofactor.

The protein localises to the cytoplasm. The catalysed reaction is tRNA(Phe) + L-phenylalanine + ATP = L-phenylalanyl-tRNA(Phe) + AMP + diphosphate + H(+). This Gluconobacter oxydans (strain 621H) (Gluconobacter suboxydans) protein is Phenylalanine--tRNA ligase beta subunit.